The primary structure comprises 329 residues: Type 2 lactosamine alpha-2,3-sialyltransferase (329 aa).

Residues 1–4 (MKGY) are Cytoplasmic-facing. The chain crosses the membrane as a helical; Signal-anchor for type II membrane protein span at residues 5–25 (LVAIFLSSIFLYYVLYCILWG). Over 26–329 (TNGYWFPAEE…IKKKMVINLT (304 aa)) the chain is Lumenal. 4 N-linked (GlcNAc...) asparagine glycosylation sites follow: asparagine 129, asparagine 181, asparagine 295, and asparagine 308.

It belongs to the glycosyltransferase 29 family.

Its subcellular location is the golgi apparatus membrane. It catalyses the reaction a neolactoside nLc4Cer(d18:1(4E)) + CMP-N-acetyl-beta-neuraminate = a neolactoside IV(3)-alpha-NeuAc-nLc4Cer(d18:1(4E)) + CMP + H(+). The enzyme catalyses a beta-D-galactosyl-(1-&gt;4)-N-acetyl-beta-D-glucosaminyl derivative + CMP-N-acetyl-beta-neuraminate = an N-acetyl-alpha-neuraminyl-(2-&gt;3)-beta-D-galactosyl-(1-&gt;4)-N-acetyl-beta-D-glucosaminyl derivative + CMP + H(+). The catalysed reaction is a neolactoside nLc6Cer(d18:1(4E)) + CMP-N-acetyl-beta-neuraminate = a neolactoside VI(3)-alpha-NeuNAc-nLc6Cer(d18:1(4E)) + CMP + H(+). In terms of biological role, transfers the sialyl residue from CMP-N-acetyl-beta-neuraminate to the terminal galactose residue on sugar chains of glycoproteins and glycolipids. It's alpha-2,3-sialyltransferase activity is specific toward type II glycan chains (Galbeta1-4GlcNAc) on glycoproteins and glycolipids such as neolactosides nLc4Cer and nLc6Cer, whose sialyl-products serve as precursors for the Lewis X antigen. Critically involved in the synthesis of functional selectin ligands needed for neutrophil recruitment during inflammation and lymphocyte homing to the lymph nodes. This is Type 2 lactosamine alpha-2,3-sialyltransferase (St3gal6) from Mus musculus (Mouse).